Reading from the N-terminus, the 212-residue chain is Ras-related protein Rab-2A (212 aa).

Gly-16, Val-17, Gly-18, Lys-19, Ser-20, Cys-21, and Thr-38 together coordinate GTP. Residue Ser-20 participates in Mg(2+) binding. Residues 37-42 carry the Switch 1 motif; the sequence is LTIGVE. Residues Thr-38 and Asp-61 each coordinate Mg(2+). Residues 63–72 carry the Switch 2 motif; sequence AGQESFRSIT. Residues Gly-64, Asn-119, Lys-120, Asp-122, Ala-150, and Lys-151 each contribute to the GTP site. 2 S-geranylgeranyl cysteine lipidation sites follow: Cys-211 and Cys-212.

The protein belongs to the small GTPase superfamily. Rab family. In terms of assembly, interacts with PRKCI. Interacts with TRIP11. Interacts (in GTP-bound form) with GARIN1B. Mg(2+) is required as a cofactor. Prenylated. Prenylation is required for association with cellular membranes.

The protein localises to the endoplasmic reticulum-Golgi intermediate compartment membrane. The protein resides in the melanosome. It is found in the endoplasmic reticulum membrane. It localises to the golgi apparatus membrane. Its subcellular location is the cytoplasmic vesicle. The protein localises to the secretory vesicle. The protein resides in the acrosome. The catalysed reaction is GTP + H2O = GDP + phosphate + H(+). With respect to regulation, regulated by guanine nucleotide exchange factors (GEFs) which promote the exchange of bound GDP for free GTP, GTPase activating proteins (GAPs) which increase the GTP hydrolysis activity, and GDP dissociation inhibitors (GDIs) which inhibit the dissociation of the nucleotide from the GTPase. Functionally, the small GTPases Rab are key regulators of intracellular membrane trafficking, from the formation of transport vesicles to their fusion with membranes. Rabs cycle between active GTP-bound and inactive GDP-bound states. In their active state, drive transport of vesicular carriers from donor organelles to acceptor organelles to regulate the membrane traffic that maintains organelle identity and morphology. RAB2A regulates autophagy by promoting autophagosome-lysosome fusion via recruitment of the HOPS endosomal tethering complex; this process involves autophagosomal RAB2A and lysosomal RAB39A recruitment of HOPS subcomplexes VPS39-VPS11 and VPS41-VPS16-VPS18-VPS33A, respectively, which assemble into a functional complex to mediate membrane tethering and SNAREs-driven membrane fusion. Required for protein transport from the endoplasmic reticulum to the Golgi complex. Regulates the compacted morphology of the Golgi. Together with RAB2B, redundantly required for efficient autophagic flux. In Gallus gallus (Chicken), this protein is Ras-related protein Rab-2A (RAB2A).